Reading from the N-terminus, the 89-residue chain is Small ribosomal subunit protein uS14A (89 aa).

It belongs to the universal ribosomal protein uS14 family. In terms of assembly, part of the 30S ribosomal subunit. Contacts proteins S3 and S10.

Its function is as follows. Binds 16S rRNA, required for the assembly of 30S particles and may also be responsible for determining the conformation of the 16S rRNA at the A site. This chain is Small ribosomal subunit protein uS14A, found in Listeria monocytogenes serotype 4b (strain F2365).